The primary structure comprises 284 residues: Four and a half LIM domains protein 5 (284 aa).

Residues 8–32 (CQYCTASLLGKKYVLKDDSLFCVTC) form a C4-type zinc finger. LIM zinc-binding domains are found at residues 39–100 (NYCE…ECSS), 101–160 (KCFH…KEFA), 161–220 (HYCN…LYAN), and 223–283 (VACS…MDSD).

In terms of assembly, interacts with CREM (via the third LIM domain). Interacts (via second LIM domain) with SPAG8.

It localises to the nucleus. Functionally, may be involved in the regulation of spermatogenesis. Stimulates CREM transcriptional activity in a phosphorylation-independent manner. The polypeptide is Four and a half LIM domains protein 5 (FHL5) (Macaca fascicularis (Crab-eating macaque)).